Consider the following 427-residue polypeptide: UPF0597 protein CD630_32320 (427 aa).

This sequence belongs to the UPF0597 family.

This is UPF0597 protein CD630_32320 from Clostridioides difficile (strain 630) (Peptoclostridium difficile).